We begin with the raw amino-acid sequence, 112 residues long: UPF0342 protein SUB0718 (112 aa).

The protein belongs to the UPF0342 family.

In Streptococcus uberis (strain ATCC BAA-854 / 0140J), this protein is UPF0342 protein SUB0718.